Consider the following 356-residue polypeptide: Histidinol-phosphate aminotransferase (356 aa).

Lysine 211 carries the N6-(pyridoxal phosphate)lysine modification.

Belongs to the class-II pyridoxal-phosphate-dependent aminotransferase family. Histidinol-phosphate aminotransferase subfamily. In terms of assembly, homodimer. The cofactor is pyridoxal 5'-phosphate.

It catalyses the reaction L-histidinol phosphate + 2-oxoglutarate = 3-(imidazol-4-yl)-2-oxopropyl phosphate + L-glutamate. It participates in amino-acid biosynthesis; L-histidine biosynthesis; L-histidine from 5-phospho-alpha-D-ribose 1-diphosphate: step 7/9. This Aeromonas hydrophila subsp. hydrophila (strain ATCC 7966 / DSM 30187 / BCRC 13018 / CCUG 14551 / JCM 1027 / KCTC 2358 / NCIMB 9240 / NCTC 8049) protein is Histidinol-phosphate aminotransferase.